The sequence spans 339 residues: Fructose-1,6-bisphosphatase isozyme 2 (339 aa).

Residues 3 to 10 (DRSPFETD) form an important for interaction with ALDOA region. AMP contacts are provided by residues Val-18 and 28-32 (TGELT). 2 residues coordinate Mg(2+): Asp-69 and Glu-98. An AMP-binding site is contributed by 113–114 (KY). Mg(2+) contacts are provided by Asp-119, Leu-121, and Asp-122. Asp-122 is a binding site for substrate. Arg-141 serves as a coordination point for AMP. The Nuclear localization signal motif lies at 204-208 (KKKGK). 213 to 216 (NEGY) lines the substrate pocket. Phosphotyrosine is present on residues Tyr-216 and Tyr-219. Substrate is bound by residues 245–249 (YVGSM), Tyr-265, and Lys-275. Glu-281 provides a ligand contact to Mg(2+).

Belongs to the FBPase class 1 family. As to quaternary structure, homotetramer. Interacts with ALDOA; the interaction blocks inhibition by physiological concentrations of AMP and reduces inhibition by Ca(2+). Interacts with alpha-actinin and F-actin. Mg(2+) serves as cofactor.

Its subcellular location is the cell junction. The protein localises to the cytoplasm. It is found in the nucleus. It localises to the myofibril. The protein resides in the sarcomere. Its subcellular location is the z line. The enzyme catalyses beta-D-fructose 1,6-bisphosphate + H2O = beta-D-fructose 6-phosphate + phosphate. The protein operates within carbohydrate biosynthesis; gluconeogenesis. Subject to complex allosteric regulation. The enzyme can assume an active R-state, or an inactive T-state. Intermediate conformations may exist. AMP acts as an allosteric inhibitor. Fructose 2,6-bisphosphate acts as a competitive inhibitor. Strongly inhibited by Ca(2+). Functionally, catalyzes the hydrolysis of fructose 1,6-bisphosphate to fructose 6-phosphate in the presence of divalent cations and probably participates in glycogen synthesis from carbohydrate precursors, such as lactate. The protein is Fructose-1,6-bisphosphatase isozyme 2 (FBP2) of Oryctolagus cuniculus (Rabbit).